We begin with the raw amino-acid sequence, 249 residues long: Leucyl/phenylalanyl-tRNA--protein transferase (249 aa).

The segment at 1–21 (MSRTLPHLLSSDPASPFPPAE) is disordered.

The protein belongs to the L/F-transferase family.

The protein localises to the cytoplasm. It carries out the reaction N-terminal L-lysyl-[protein] + L-leucyl-tRNA(Leu) = N-terminal L-leucyl-L-lysyl-[protein] + tRNA(Leu) + H(+). It catalyses the reaction N-terminal L-arginyl-[protein] + L-leucyl-tRNA(Leu) = N-terminal L-leucyl-L-arginyl-[protein] + tRNA(Leu) + H(+). The catalysed reaction is L-phenylalanyl-tRNA(Phe) + an N-terminal L-alpha-aminoacyl-[protein] = an N-terminal L-phenylalanyl-L-alpha-aminoacyl-[protein] + tRNA(Phe). Functions in the N-end rule pathway of protein degradation where it conjugates Leu, Phe and, less efficiently, Met from aminoacyl-tRNAs to the N-termini of proteins containing an N-terminal arginine or lysine. The polypeptide is Leucyl/phenylalanyl-tRNA--protein transferase (Xanthomonas campestris pv. campestris (strain 8004)).